Reading from the N-terminus, the 655-residue chain is Golgi integral membrane protein 4 (655 aa).

G2 carries the N-myristoyl glycine lipid modification. Over 2-12 (GNGMCSRKQKR) the chain is Cytoplasmic. A helical; Signal-anchor for type II membrane protein membrane pass occupies residues 13 to 33 (IFQTLLLLTVVFGFLYGAMLY). Over 34 to 655 (LELQTQLRKA…AEKSHRRAEM (622 aa)) the chain is Lumenal. The tract at residues 38-107 (TQLRKAEAVA…ETLNKGRQDS (70 aa)) is golgi targeting. The stretch at 66–216 (EHRSRLEKSL…KQLKDTLNRI (151 aa)) forms a coiled coil. The interval 80 to 175 (LEHKKAKEDF…QELSKLKETV (96 aa)) is endosome targeting. The segment at 122–145 (KSQHEELRKQHSDLEEEHRKQGED) is disordered. Basic and acidic residues predominate over residues 123–145 (SQHEELRKQHSDLEEEHRKQGED). Residues 176-220 (YNLREENRQLRKAHQDIHTQLQDVKTQVAEYKQLKDTLNRIPSFR) are golgi targeting. Residue N229 is glycosylated (N-linked (GlcNAc...) asparagine). 2 disordered regions span residues 256 to 275 (QPNH…SSMQ) and 285 to 655 (EQNQ…RAEM). 4 stretches are compositionally biased toward basic and acidic residues: residues 261 to 270 (AGPRRMEEKP), 290 to 307 (EPRE…RKAL), 319 to 328 (EHLEEEHDPS), and 348 to 360 (LDGH…EHST). S328 carries the phosphoserine modification. The span at 361–370 (KAATNFQSPY) shows a compositional bias: polar residues. Basic and acidic residues predominate over residues 381–398 (ARRDEEAQRLREHQEALH). 2 stretches are compositionally biased toward low complexity: residues 399-423 (QQRL…MAQQ) and 433-442 (QQHQEQLRQQ). A compositionally biased stretch (basic and acidic residues) spans 468-508 (AYDRDNQRQDEAEGDPGNRQELREPGHQEGDPEVEADRAAV). At S540 the chain carries Phosphoserine. Residues 567 to 589 (QQEDNVDEQYQDEGEEEVQEDLT) show a composition bias toward acidic residues. At Y576 the chain carries Phosphotyrosine. At T589 the chain carries Phosphothreonine. A compositionally biased stretch (basic and acidic residues) spans 590-620 (EEKKREMEHNVEETYGEHPDDKNNDGEEQGV). Phosphotyrosine is present on Y633. A compositionally biased stretch (acidic residues) spans 633 to 642 (YEEEEDEEDG).

This sequence belongs to the GOLIM4 family. In terms of processing, phosphorylated by c-AMP-dependent kinases most probably in its lumenal part. O-glycosylated; modified by sialic acid residues. Post-translationally, N-glycosylated; N-glycans are of the complex type and modified by sialic acid residues. As to expression, expressed by spermatozoa (at protein level).

Its subcellular location is the golgi apparatus. The protein resides in the golgi stack membrane. It is found in the endosome membrane. It localises to the membrane. In terms of biological role, plays a role in endosome to Golgi protein trafficking; mediates protein transport along the late endosome-bypass pathway from the early endosome to the Golgi. This Mus musculus (Mouse) protein is Golgi integral membrane protein 4 (Golim4).